Reading from the N-terminus, the 134-residue chain is Fluoride-specific ion channel FluC (134 aa).

4 helical membrane passes run 7–27, 38–58, 69–89, and 110–130; these read LAVA…TIMA, GTLL…IVLV, LFLF…AAES, and VGSL…LLGH. Residues glycine 77 and threonine 80 each contribute to the Na(+) site.

This sequence belongs to the fluoride channel Fluc/FEX (TC 1.A.43) family.

It is found in the cell inner membrane. It carries out the reaction fluoride(in) = fluoride(out). Na(+) is not transported, but it plays an essential structural role and its presence is essential for fluoride channel function. Fluoride-specific ion channel. Important for reducing fluoride concentration in the cell, thus reducing its toxicity. The polypeptide is Fluoride-specific ion channel FluC (Legionella pneumophila subsp. pneumophila (strain Philadelphia 1 / ATCC 33152 / DSM 7513)).